Reading from the N-terminus, the 98-residue chain is Exopolysaccharide production repressor protein (98 aa).

2 consecutive transmembrane segments (helical) span residues 6 to 26 (VFLSMIGALAAFAVATYYLNG) and 35 to 55 (TLICAVLIQVGYFIAVLFLVW). The tract at residues 73–98 (AEAANDEKQPGKVSLRRLNRPHHLNS) is disordered. Residues 86–98 (SLRRLNRPHHLNS) are compositionally biased toward basic residues.

It localises to the cell membrane. It participates in glycan metabolism; exopolysaccharide biosynthesis. Functionally, inhibition of exopolysaccharide synthesis (EPS) and nodulation ability (NOD). The polypeptide is Exopolysaccharide production repressor protein (exoX) (Rhizobium meliloti (strain 1021) (Ensifer meliloti)).